The chain runs to 246 residues: Mast cell protease 4 (246 aa).

An N-terminal signal peptide occupies residues 1–18; the sequence is MQALLFLMALLLPSGAGA. Positions 19–20 are cleaved as a propeptide — activation peptide; it reads EE. A Peptidase S1 domain is found at 21 to 244; that stretch reads IIGGVESRPH…YVPWINRVIK (224 aa). Residues cysteine 50 and cysteine 66 are joined by a disulfide bond. Active-site charge relay system residues include histidine 65 and aspartate 109. 2 disulfide bridges follow: cysteine 143-cysteine 208 and cysteine 174-cysteine 187. The active-site Charge relay system is serine 202.

Belongs to the peptidase S1 family. Granzyme subfamily. In terms of assembly, monomer. Interacts with iripin-2, a serine protease inhibitor from Ixodes ricinus saliva. Submucosal mast cells. In femoral muscle, detected in myocytes but not in mast cells.

With respect to regulation, completely inhibited by serine protease inhibitors such as chymostatin, diisopropylfluorophosphate and phenylmethylsulfonyl fluoride, but not by p-tosyl-L-phenylalanine chloromethyl ketone, p-tosyl-L-lysine chloromethyl ketone, pepstatin, E-64, EDTA or o-phenanthroline. Also inhibited by lima bean trypsin inhibitor, soy bean trypsin inhibitor and human plasma alpha1-antichymotrypsin. Has chymotrypsin-like activity. Hydrolyzes the amide bonds of synthetic substrates having Tyr and Phe residues at the P1 position. Preferentially hydrolyzes the 'Tyr-4-|-Ile-5' bond of angiotensin I and the 'Phe-20-|-Ala-21' bond of amyloid beta-protein, and is less active towards the 'Phe-8-|-His-9' bond of angiotensin I and the 'Phe-4-|-Ala-5' and 'Tyr-10-|-Glu-11' bonds of amyloid beta-protein. Involved in thrombin regulation and fibronectin processing. This chain is Mast cell protease 4 (Mcpt4), found in Mus musculus (Mouse).